Reading from the N-terminus, the 183-residue chain is ATP synthase subunit b, chloroplastic (183 aa).

Residues 33–51 (IINLSVVIGVVVSFGGDAL) traverse the membrane as a helical segment.

The protein belongs to the ATPase B chain family. F-type ATPases have 2 components, F(1) - the catalytic core - and F(0) - the membrane proton channel. F(1) has five subunits: alpha(3), beta(3), gamma(1), delta(1), epsilon(1). F(0) has four main subunits: a(1), b(1), b'(1) and c(10-14). The alpha and beta chains form an alternating ring which encloses part of the gamma chain. F(1) is attached to F(0) by a central stalk formed by the gamma and epsilon chains, while a peripheral stalk is formed by the delta, b and b' chains.

It localises to the plastid. The protein localises to the chloroplast thylakoid membrane. In terms of biological role, f(1)F(0) ATP synthase produces ATP from ADP in the presence of a proton or sodium gradient. F-type ATPases consist of two structural domains, F(1) containing the extramembraneous catalytic core and F(0) containing the membrane proton channel, linked together by a central stalk and a peripheral stalk. During catalysis, ATP synthesis in the catalytic domain of F(1) is coupled via a rotary mechanism of the central stalk subunits to proton translocation. Component of the F(0) channel, it forms part of the peripheral stalk, linking F(1) to F(0). The sequence is that of ATP synthase subunit b, chloroplastic from Oltmannsiellopsis viridis (Marine flagellate).